Reading from the N-terminus, the 435-residue chain is Glutamyl-tRNA reductase (435 aa).

Substrate is bound by residues 49-52, S109, 114-116, and Q120; these read TCNR and ETQ. The active-site Nucleophile is C50. An NADP(+)-binding site is contributed by 189 to 194; it reads GAGEMS.

The protein belongs to the glutamyl-tRNA reductase family. In terms of assembly, homodimer.

The catalysed reaction is (S)-4-amino-5-oxopentanoate + tRNA(Glu) + NADP(+) = L-glutamyl-tRNA(Glu) + NADPH + H(+). Its pathway is porphyrin-containing compound metabolism; protoporphyrin-IX biosynthesis; 5-aminolevulinate from L-glutamyl-tRNA(Glu): step 1/2. Functionally, catalyzes the NADPH-dependent reduction of glutamyl-tRNA(Glu) to glutamate 1-semialdehyde (GSA). This Listeria monocytogenes serotype 4a (strain HCC23) protein is Glutamyl-tRNA reductase.